A 144-amino-acid polypeptide reads, in one-letter code: MNAAVGLRRRARLSRLVSFSASHRLHSPSLSAEENLKVFGKCNNPNGHGHNYKVVVTIHGEIDPVTGMVMNLTDLKEYMEEAIMKPLDHKNLDLDVPYFADVVSTTENVAVYIWENLQRLLPVGALYKVKVYETDNNIVVYKGE.

Residues 1–4 (MNAA) constitute a propeptide that is removed on maturation. S18 is modified (phosphoserine). H23 provides a ligand contact to Zn(2+). Residue S27 is modified to Phosphoserine. C42 (proton acceptor) is an active-site residue. H48 and H50 together coordinate Zn(2+). H89 (charge relay system) is an active-site residue. Y127 carries the post-translational modification Phosphotyrosine. E133 functions as the Charge relay system in the catalytic mechanism.

This sequence belongs to the PTPS family. Homohexamer formed of two homotrimers in a head to head fashion. Zn(2+) serves as cofactor. Phosphorylation of Ser-18 is required for maximal enzyme activity.

The enzyme catalyses 7,8-dihydroneopterin 3'-triphosphate = 6-pyruvoyl-5,6,7,8-tetrahydropterin + triphosphate + H(+). It functions in the pathway cofactor biosynthesis; tetrahydrobiopterin biosynthesis; tetrahydrobiopterin from 7,8-dihydroneopterin triphosphate: step 1/3. Its function is as follows. Involved in the biosynthesis of tetrahydrobiopterin, an essential cofactor of aromatic amino acid hydroxylases. Catalyzes the transformation of 7,8-dihydroneopterin triphosphate into 6-pyruvoyl tetrahydropterin. The protein is 6-pyruvoyl tetrahydrobiopterin synthase (Pts) of Rattus norvegicus (Rat).